The following is a 309-amino-acid chain: Taste receptor type 2 member 31 (309 aa).

The Extracellular segment spans residues M1 to T2. The chain crosses the membrane as a helical span at residues T3–A23. Residues N24–R55 lie on the Cytoplasmic side of the membrane. A helical membrane pass occupies residues V56–Y76. At S77 to T100 the chain is on the extracellular side. The chain crosses the membrane as a helical span at residues S101–L121. The Cytoplasmic portion of the chain corresponds to K122–K126. Residues S127–I147 traverse the membrane as a helical segment. Residues N148 to T181 lie on the Extracellular side of the membrane. N-linked (GlcNAc...) asparagine glycosylation is present at N161. A helical membrane pass occupies residues L182–L202. The Cytoplasmic segment spans residues C203–Q229. A helical membrane pass occupies residues T230 to W250. Residues S251–P259 are Extracellular-facing. A helical membrane pass occupies residues V260–I280. The Cytoplasmic portion of the chain corresponds to W281 to P309.

The protein belongs to the G-protein coupled receptor T2R family. As to expression, expressed in subsets of taste receptor cells of the tongue and exclusively in gustducin-positive cells.

The protein localises to the membrane. Receptor that may play a role in the perception of bitterness and is gustducin-linked. May play a role in sensing the chemical composition of the gastrointestinal content. The activity of this receptor may stimulate alpha gustducin, mediate PLC-beta-2 activation and lead to the gating of TRPM5. Activated by the sulfonyl amide sweeteners saccharin and acesulfame K. This Homo sapiens (Human) protein is Taste receptor type 2 member 31 (TAS2R31).